A 195-amino-acid polypeptide reads, in one-letter code: Protein GrpE (195 aa).

The span at 1-18 shows a compositional bias: basic and acidic residues; the sequence is MDPKEKKTKQEEELKVDD. Positions 1 to 41 are disordered; sequence MDPKEKKTKQEEELKVDDIQDTVEGQSQNEEATEATEPLTA.

It belongs to the GrpE family. As to quaternary structure, homodimer.

The protein localises to the cytoplasm. Functionally, participates actively in the response to hyperosmotic and heat shock by preventing the aggregation of stress-denatured proteins, in association with DnaK and GrpE. It is the nucleotide exchange factor for DnaK and may function as a thermosensor. Unfolded proteins bind initially to DnaJ; upon interaction with the DnaJ-bound protein, DnaK hydrolyzes its bound ATP, resulting in the formation of a stable complex. GrpE releases ADP from DnaK; ATP binding to DnaK triggers the release of the substrate protein, thus completing the reaction cycle. Several rounds of ATP-dependent interactions between DnaJ, DnaK and GrpE are required for fully efficient folding. This Bacteroides fragilis (strain ATCC 25285 / DSM 2151 / CCUG 4856 / JCM 11019 / LMG 10263 / NCTC 9343 / Onslow / VPI 2553 / EN-2) protein is Protein GrpE.